Consider the following 262-residue polypeptide: Protein BREAKING OF ASYMMETRY IN THE STOMATAL LINEAGE (262 aa).

2 disordered regions span residues 32–107 and 129–222; these read DEDG…QPPV and KEGK…GRGS. The segment covering 37–47 has biased composition (low complexity); it reads NNNGNTTNNNN. Short sequence motifs (nuclear localization signal) lie at residues 50 to 57 and 61 to 68; these read FKRIKRKI and KKKRSERK. Positions 51-66 are enriched in basic residues; the sequence is KRIKRKIKSTKKKRSE. A phosphoserine; by ASK7 mark is found at serine 72, serine 85, serine 86, and serine 87. Low complexity predominate over residues 84-95; that stretch reads RSSSVSPTTSGS. At serine 89 the chain carries Phosphoserine; by ASK7 and MPK6. At threonine 91 the chain carries Phosphothreonine; by ASK7. Residues 129–146 show a composition bias toward basic and acidic residues; it reads KEGKQEKKETESSSEKSP. Residues serine 145 and serine 168 each carry the phosphoserine; by MPK6 modification. Positions 179–189 are enriched in polar residues; it reads NDNTSCQGTKD. Basic and acidic residues predominate over residues 190 to 200; it reads VSSDVTERTKE. The tract at residues 222–262 is required for polarization at the cell cortex; that stretch reads SFAFPILGVEWMGSPAKMPESDDLSPKKQKPVALGFQCCRF. The short motif at 223–226 is the FxFP, required for cortical polarity formation element; sequence FAFP. Phosphoserine; by MPK6 occurs at positions 235 and 246.

Component of a complex made of POLAR, BASL, ASK7/BIN2 and ASK3/SK12. Interacts with POLAR, ASK7/BIN2 and ASK3/SK12. Binds to YDA when phosphorylated. Interacts with MPK6, MPK3 and MKK5. Cortical localization of BASL requires phosphorylation mediated by MPK3 and MPK6. Phosphorylation promotes YDA binding. Phosphorylation status modulates subcellular mobility. As to expression, mostly expressed in stomatal lineage cells including asymmetrically dividing meristemoid mother cells (MMCs) and meristemoids, and, at lower levels, in their sisters. Also present in vasculature. Expressed at low levels in the epidermal pavement cells.

The protein resides in the cytoplasm. The protein localises to the nucleus. Its subcellular location is the cell cortex. It localises to the cell membrane. In terms of biological role, regulates asymmetric cell division (ACD), especially in stomatal-lineage cells, probably by modulating accumulation and subcellular polarization of POLAR and SPCH. Mediates an attenuation of MAPK signaling upon polarization of POLAR and ASK7/BIN2 in stomatal lineage ground cells (SLGCs) undergoing ACD, and relieves BIN2 inhibition of SPCH in the nucleus. When phosphorylated, functions as a scaffold and recruits the MAPKKK YODA, MPK3 and MPK6 to spatially reorganize the MAPK signaling pathway at the cortex of cells undergoing ACD. Cortical polarization leads to elevated nuclear MPK6 signaling and lowered SPCH abundance in one of the two daughter cells, thus differentiating the two daughter cells after ACD. The polypeptide is Protein BREAKING OF ASYMMETRY IN THE STOMATAL LINEAGE (Arabidopsis thaliana (Mouse-ear cress)).